Here is a 226-residue protein sequence, read N- to C-terminus: Lipoprotein-releasing system ATP-binding protein LolD (226 aa).

The ABC transporter domain occupies 5–225 (LELVEIERHF…TLKEKKIVEL (221 aa)). 41 to 48 (APSGAGKS) provides a ligand contact to ATP.

It belongs to the ABC transporter superfamily. Lipoprotein translocase (TC 3.A.1.125) family. As to quaternary structure, the complex is composed of two ATP-binding proteins (LolD) and two transmembrane proteins (LolC and LolE).

Its subcellular location is the cell inner membrane. Part of the ABC transporter complex LolCDE involved in the translocation of mature outer membrane-directed lipoproteins, from the inner membrane to the periplasmic chaperone, LolA. Responsible for the formation of the LolA-lipoprotein complex in an ATP-dependent manner. The polypeptide is Lipoprotein-releasing system ATP-binding protein LolD (Bartonella quintana (strain Toulouse) (Rochalimaea quintana)).